The primary structure comprises 956 residues: DNA polymerase I (956 aa).

The 5'-3' exonuclease domain maps to 209-296 (VTVRQWVDYR…VTDLPLDIEF (88 aa)).

It belongs to the DNA polymerase type-A family. As to quaternary structure, single-chain monomer with multiple functions.

It catalyses the reaction DNA(n) + a 2'-deoxyribonucleoside 5'-triphosphate = DNA(n+1) + diphosphate. A DNA polymerase, required for DNA repair after DNA damage induced by ionizing radiation (IR); this is not the major DNA polymerase. Following severe irradiation (7 kGy of gamma irradiation) genomic DNA is fragmented. DNA is progressively degraded for the first 1.5 hours after IR, in a step promoted by RecA and counterbalanced by DNA Pol I and Pol III, followed by massive DNA synthesis and genome reassembly in the next hour. Optimal priming of DNA synthesis requires both RecA and RadA, Pol III initiates DNA synthesis while both Pol I and Pol III are required for its continuation. May also have 5'-3' exonuclease activity. This chain is DNA polymerase I (polA), found in Deinococcus radiodurans (strain ATCC 13939 / DSM 20539 / JCM 16871 / CCUG 27074 / LMG 4051 / NBRC 15346 / NCIMB 9279 / VKM B-1422 / R1).